Consider the following 465-residue polypeptide: Sperm microtubule associated protein 2-like (465 aa).

The span at 1-29 (MENQEFLSSSAPSEVTDGQVSTEISTCSE) shows a compositional bias: polar residues. The interval 1–140 (MENQEFLSSS…REAKETELLP (140 aa)) is disordered. Basic and acidic residues-rich tracts occupy residues 40–70 (LDTH…QDQR) and 114–137 (KARE…KETE). THEG repeat units lie at residues 174 to 192 (RKCF…PKKQ), 214 to 233 (GALK…PKEV), 260 to 279 (PALF…PNGF), 297 to 316 (SLRI…AKGT), 333 to 352 (STLS…PRIK), 373 to 392 (AAMI…SKSV), 409 to 428 (ATTH…PNKR), and 446 to 465 (AALK…PLTR).

This chain is Sperm microtubule associated protein 2-like, found in Homo sapiens (Human).